We begin with the raw amino-acid sequence, 163 residues long: RxLR effector protein PITG_13625 (163 aa).

A signal peptide spans 1–23 (MKVSKAIVALAALCMALLAPAAG). The RxLR-dEER signature appears at 37–52 (RHLRQESAELATTPEE).

It belongs to the RxLR effector family.

It is found in the secreted. Its subcellular location is the host cell membrane. Effector that enhances P.infestans colonization of Nicotiana benthamiana leaves. The sequence is that of RxLR effector protein PITG_13625 from Phytophthora infestans (strain T30-4) (Potato late blight agent).